The chain runs to 1442 residues: CD109 antigen (1442 aa).

A signal peptide spans 1–21 (MRSRRLLSAAHLLCLCAVALA). N-linked (GlcNAc...) asparagine glycans are attached at residues N67, N117, N246, N278, N370, and N421. A bait region (approximate) region spans residues 595–704 (DKSVTLMENS…TWIWLDAYMG (110 aa)). The segment at residues 923 to 926 (CGEQ) is a cross-link (isoglutamyl cysteine thioester (Cys-Gln)). A glycan (N-linked (GlcNAc...) asparagine) is linked at N1088. A1419 carries GPI-anchor amidated alanine lipidation. Residues 1420 to 1442 (TDSLRRSSSLLVFCSVLLYFVQH) constitute a propeptide, removed in mature form.

This sequence belongs to the protease inhibitor I39 (alpha-2-macroglobulin) family. Heterodimer; disulfide-linked. Interacts with TGFB1 and TGFBR1. Forms a heteromeric complex with TGFBR1, TGFBR2 and TGFBR3 in a ligand-independent manner. In terms of processing, N-glycosylated. 2 forms of 150 (p150) and 120 kDa (p120) exist due to proteolytic degradation from a 180 kDa form.

The protein localises to the cell membrane. Its function is as follows. Modulates negatively TGFB1 signaling in keratinocytes. The polypeptide is CD109 antigen (Cd109) (Mus musculus (Mouse)).